The following is a 298-amino-acid chain: Probable protein phosphatase 2C 26 (298 aa).

Positions 48–295 constitute a PPM-type phosphatase domain; it reads SVGIHAIPHP…DDVTVIVAKV (248 aa). Positions 82, 83, 213, and 286 each coordinate Mn(2+).

Belongs to the PP2C family. It depends on Mg(2+) as a cofactor. The cofactor is Mn(2+).

The enzyme catalyses O-phospho-L-seryl-[protein] + H2O = L-seryl-[protein] + phosphate. The catalysed reaction is O-phospho-L-threonyl-[protein] + H2O = L-threonyl-[protein] + phosphate. The sequence is that of Probable protein phosphatase 2C 26 from Arabidopsis thaliana (Mouse-ear cress).